Here is a 317-residue protein sequence, read N- to C-terminus: Ribosomal RNA large subunit methyltransferase F (317 aa).

It belongs to the methyltransferase superfamily. METTL16/RlmF family.

It is found in the cytoplasm. The catalysed reaction is adenosine(1618) in 23S rRNA + S-adenosyl-L-methionine = N(6)-methyladenosine(1618) in 23S rRNA + S-adenosyl-L-homocysteine + H(+). In terms of biological role, specifically methylates the adenine in position 1618 of 23S rRNA. This chain is Ribosomal RNA large subunit methyltransferase F, found in Pseudomonas putida (strain ATCC 47054 / DSM 6125 / CFBP 8728 / NCIMB 11950 / KT2440).